We begin with the raw amino-acid sequence, 182 residues long: Ribosome maturation factor RimM (182 aa).

One can recognise a PRC barrel domain in the interval 103-182 (EDEFYWRELF…RIEVDWDPAF (80 aa)).

Belongs to the RimM family. Binds ribosomal protein uS19.

It localises to the cytoplasm. In terms of biological role, an accessory protein needed during the final step in the assembly of 30S ribosomal subunit, possibly for assembly of the head region. Essential for efficient processing of 16S rRNA. May be needed both before and after RbfA during the maturation of 16S rRNA. It has affinity for free ribosomal 30S subunits but not for 70S ribosomes. The protein is Ribosome maturation factor RimM of Vibrio cholerae serotype O1 (strain ATCC 39315 / El Tor Inaba N16961).